The chain runs to 61 residues: Large ribosomal subunit protein uL30 (61 aa).

This sequence belongs to the universal ribosomal protein uL30 family. Part of the 50S ribosomal subunit.

The polypeptide is Large ribosomal subunit protein uL30 (Oenococcus oeni (strain ATCC BAA-331 / PSU-1)).